The chain runs to 263 residues: HTH-type transcriptional repressor NanR (263 aa).

Residues 1–22 are disordered; the sequence is MGLMNAFDSQTEDSSPAIGRNL. Residues 30–98 form the HTH gntR-type domain; the sequence is KKLSEMVEEE…NGERARVSRP (69 aa). The H-T-H motif DNA-binding region spans 58–77; the sequence is ERELMAFFNVGRPSVREALA.

The protein belongs to the NanR family.

Functionally, transcriptional repressor that controls expression of the genes required for the catabolism of sialic acids. This is HTH-type transcriptional repressor NanR from Shigella sonnei (strain Ss046).